Here is a 309-residue protein sequence, read N- to C-terminus: uncharacterized protein (309 aa).

Residues 23-43 form a helical membrane-spanning segment; it reads ALVLSSIVNILLLLLIYSTVF.

The protein belongs to the chlamydial CPn_0593/CT_474/TC_0759 family.

The protein resides in the membrane. This is an uncharacterized protein from Chlamydia trachomatis serovar D (strain ATCC VR-885 / DSM 19411 / UW-3/Cx).